Consider the following 134-residue polypeptide: Large ribosomal subunit protein bL17 (134 aa).

Belongs to the bacterial ribosomal protein bL17 family. As to quaternary structure, part of the 50S ribosomal subunit. Contacts protein L32.

The protein is Large ribosomal subunit protein bL17 of Colwellia psychrerythraea (strain 34H / ATCC BAA-681) (Vibrio psychroerythus).